A 241-amino-acid polypeptide reads, in one-letter code: Endonuclease NucS (241 aa).

This sequence belongs to the NucS endonuclease family.

Its subcellular location is the cytoplasm. Functionally, cleaves both 3' and 5' ssDNA extremities of branched DNA structures. This is Endonuclease NucS from Corynebacterium jeikeium (strain K411).